A 159-amino-acid polypeptide reads, in one-letter code: Small ribosomal subunit protein uS9 (159 aa).

Belongs to the universal ribosomal protein uS9 family.

This chain is Small ribosomal subunit protein uS9, found in Methylocella silvestris (strain DSM 15510 / CIP 108128 / LMG 27833 / NCIMB 13906 / BL2).